A 1986-amino-acid polypeptide reads, in one-letter code: Protein Shroom3 (1986 aa).

Residues 1–21 are disordered; the sequence is MKTPENLEEPSATPNPSRTPT. The PDZ domain occupies 24 to 109; that stretch reads FVYLEALLEG…TLRLVVRRDV (86 aa). Disordered regions lie at residues 152–199, 211–239, 265–285, 342–463, and 564–1055; these read CSEP…SSTS, RSPDQCSSQGSMESLEPSGGYPPCHLLSP, TSSSIFEYPPPGGSARERSGS, QGCA…QPLL, and NEDS…RRIF. A Phosphoserine modification is found at Ser212. Composition is skewed to polar residues over residues 357-376 and 415-425; these read PSPSWSQQCSGSLETATDNL and PQTNSSGSQKT. The span at 430 to 440 shows a compositional bias: basic and acidic residues; it reads DQLHTVPERSP. Residues Ser439 and Ser443 each carry the phosphoserine modification. Over residues 595 to 607 the composition is skewed to polar residues; the sequence is ACSNHHSLSSPQA. Over residues 630–645 the composition is skewed to basic and acidic residues; that stretch reads QEDHNANLRQKVEREG. Polar residues predominate over residues 653 to 677; the sequence is NSGRTRSAFSSLQNIPESLRRQSNV. Over residues 747–761 the composition is skewed to low complexity; it reads SGASQRRLSSSSSAA. A compositionally biased stretch (basic and acidic residues) spans 774–785; that stretch reads KVSRIEEREQGR. 2 stretches are compositionally biased toward low complexity: residues 796 to 814 and 865 to 874; these read YGPGYRPGRTGPTPSTSSS and DGRGPPARGG. Phosphoserine is present on Ser888. The span at 895 to 908 shows a compositional bias: basic and acidic residues; that stretch reads EAEREASWSEDRPG. Thr909 is subject to Phosphothreonine. Phosphoserine occurs at positions 912 and 969. An ASD1 domain is found at 927–1023; it reads IKDAQSRVLG…SEPEKMNEVG (97 aa). Residues 1004–1020 are compositionally biased toward basic and acidic residues; sequence LTVEQKKRSYSEPEKMN. Ser1063 and Ser1066 each carry phosphoserine. 4 disordered regions span residues 1083 to 1102, 1107 to 1223, 1304 to 1425, and 1446 to 1654; these read YIQRKTGKRPTGAACTPEAG, AQSA…AEDL, ATVA…PPWV, and ANLK…KTSE. Residues 1114–1127 are compositionally biased toward low complexity; the sequence is AGPAAPDGPGLASA. A compositionally biased stretch (basic and acidic residues) spans 1134–1146; it reads REPEALPRKEHTH. A phosphoserine mark is found at Trp1175, Val1179, and Ser1219. Residues 1307-1318 are compositionally biased toward low complexity; it reads ASSAPPESSGAA. 2 positions are modified to phosphoserine: Ser1350 and Ser1354. The span at 1366-1399 shows a compositional bias: polar residues; it reads YRSQLAMDQQTGQQPPSSPASAVTQPTSPRSPEL. Positions 1455–1469 are enriched in low complexity; sequence PSRPSSCSTSDPDTP. A compositionally biased stretch (pro residues) spans 1513-1524; sequence LPPPPPPSPPSE. Residues 1581–1630 are compositionally biased toward polar residues; it reads EGSQIMTATPPQTSAKGSEAESNTPSSASAQPQLNGSPGKQLCPSQTRNL. Over residues 1634 to 1654 the composition is skewed to basic and acidic residues; sequence PVERTQDLGKKTHAEPQKTSE. An ASD2 domain is found at 1659–1947; that stretch reads EALAKEIVHQ…QVRCLLESLP (289 aa). Positions 1844–1890 form a coiled coil; it reads RLARVENVLRGLGEDASKEERSSLNEKRKVLAGQHEDARELKENLDR.

This sequence belongs to the shroom family. Interacts with F-actin. Interacts with ROCK1.

It localises to the cell junction. The protein localises to the adherens junction. Its subcellular location is the cytoplasm. It is found in the cytoskeleton. The protein resides in the apical cell membrane. Its function is as follows. Controls cell shape changes in the neuroepithelium during neural tube closure. Induces apical constriction in epithelial cells by promoting the apical accumulation of F-actin and myosin II, and probably by bundling stress fibers. Induces apicobasal cell elongation by redistributing gamma-tubulin and directing the assembly of robust apicobasal microtubule arrays. The sequence is that of Protein Shroom3 (Shroom3) from Mus musculus (Mouse).